A 105-amino-acid chain; its full sequence is MIASKFGIGQQVRHSLLGYLGVVVDIDPVYSLSEPSPDELAVNDELRAAPWYHVVMEDDNGLPVHTYLAEAQLSSELQDERPEQPSMDELAQTIRKQRQAPRLRN.

The tract at residues Ser74–Asn105 is disordered. A compositionally biased stretch (basic residues) spans Arg95–Asn105.

It belongs to the HspQ family.

It localises to the cytoplasm. Functionally, involved in the degradation of certain denaturated proteins, including DnaA, during heat shock stress. This is Heat shock protein HspQ from Shigella dysenteriae serotype 1 (strain Sd197).